A 222-amino-acid chain; its full sequence is Putative N-acetylmannosamine-6-phosphate 2-epimerase (222 aa).

This sequence belongs to the NanE family.

The catalysed reaction is an N-acyl-D-glucosamine 6-phosphate = an N-acyl-D-mannosamine 6-phosphate. The protein operates within amino-sugar metabolism; N-acetylneuraminate degradation; D-fructose 6-phosphate from N-acetylneuraminate: step 3/5. Functionally, converts N-acetylmannosamine-6-phosphate (ManNAc-6-P) to N-acetylglucosamine-6-phosphate (GlcNAc-6-P). The protein is Putative N-acetylmannosamine-6-phosphate 2-epimerase of Oceanobacillus iheyensis (strain DSM 14371 / CIP 107618 / JCM 11309 / KCTC 3954 / HTE831).